The sequence spans 265 residues: Cytochrome c oxidase subunit 3 (265 aa).

7 helical membrane-spanning segments follow: residues 16 to 36 (PWPI…VMYM), 41 to 61 (GGAT…FVWW), 84 to 104 (YGSI…FWAS), 137 to 157 (TPIL…ILAG), 162 to 182 (AVYA…FQGM), 200 to 220 (FYLA…FSII), and 245 to 265 (WHFV…WGGI).

It belongs to the cytochrome c oxidase subunit 3 family. As to quaternary structure, component of the cytochrome c oxidase (complex IV, CIV), a multisubunit enzyme composed of a catalytic core of 3 subunits and several supernumerary subunits. The complex exists as a monomer or a dimer and forms supercomplexes (SCs) in the inner mitochondrial membrane with ubiquinol-cytochrome c oxidoreductase (cytochrome b-c1 complex, complex III, CIII).

Its subcellular location is the mitochondrion inner membrane. The catalysed reaction is 4 Fe(II)-[cytochrome c] + O2 + 8 H(+)(in) = 4 Fe(III)-[cytochrome c] + 2 H2O + 4 H(+)(out). Its function is as follows. Component of the cytochrome c oxidase, the last enzyme in the mitochondrial electron transport chain which drives oxidative phosphorylation. The respiratory chain contains 3 multisubunit complexes succinate dehydrogenase (complex II, CII), ubiquinol-cytochrome c oxidoreductase (cytochrome b-c1 complex, complex III, CIII) and cytochrome c oxidase (complex IV, CIV), that cooperate to transfer electrons derived from NADH and succinate to molecular oxygen, creating an electrochemical gradient over the inner membrane that drives transmembrane transport and the ATP synthase. Cytochrome c oxidase is the component of the respiratory chain that catalyzes the reduction of oxygen to water. Electrons originating from reduced cytochrome c in the intermembrane space (IMS) are transferred via the dinuclear copper A center (CU(A)) of subunit 2 and heme A of subunit 1 to the active site in subunit 1, a binuclear center (BNC) formed by heme A3 and copper B (CU(B)). The BNC reduces molecular oxygen to 2 water molecules using 4 electrons from cytochrome c in the IMS and 4 protons from the mitochondrial matrix. The protein is Cytochrome c oxidase subunit 3 (COX3) of Oenothera berteroana (Bertero's evening primrose).